The chain runs to 313 residues: tRNA(Ile)-lysidine synthase (313 aa).

ATP is bound at residue 37–42 (SGGPDS).

This sequence belongs to the tRNA(Ile)-lysidine synthase family.

It localises to the cytoplasm. It catalyses the reaction cytidine(34) in tRNA(Ile2) + L-lysine + ATP = lysidine(34) in tRNA(Ile2) + AMP + diphosphate + H(+). Its function is as follows. Ligates lysine onto the cytidine present at position 34 of the AUA codon-specific tRNA(Ile) that contains the anticodon CAU, in an ATP-dependent manner. Cytidine is converted to lysidine, thus changing the amino acid specificity of the tRNA from methionine to isoleucine. In Corynebacterium efficiens (strain DSM 44549 / YS-314 / AJ 12310 / JCM 11189 / NBRC 100395), this protein is tRNA(Ile)-lysidine synthase.